The following is a 75-amino-acid chain: Lipid-anchored plasma membrane protein CPP2 (75 aa).

Residues 1–43 are disordered; that stretch reads MSQQQGYYQQGPPQQGYYQQGPPQQGYYQQGPPQQGYPQQQPV. 3 repeat units span residues 4–13, 14–23, and 24–33. The tract at residues 4 to 33 is 3 X 10 AA tandem repeats of Q-Q-G-Y-Y-Q-Q-G-P-P; the sequence is QQGYYQQGPPQQGYYQQGPPQQGYYQQGPP.

This sequence belongs to the CYSTM1 family. Post-translationally, palmitoylated near the C-terminus.

The protein resides in the cell membrane. In Saccharomyces cerevisiae (strain ATCC 204508 / S288c) (Baker's yeast), this protein is Lipid-anchored plasma membrane protein CPP2.